Reading from the N-terminus, the 498-residue chain is Cytochrome P450 71D15 (498 aa).

The chain crosses the membrane as a helical; Signal-anchor for type II membrane protein span at residues 3–23; that stretch reads LLQLWSALIILVVTYTISLLI. Cys-437 lines the heme pocket.

This sequence belongs to the cytochrome P450 family. It depends on heme as a cofactor.

Its subcellular location is the endoplasmic reticulum membrane. The enzyme catalyses (4S)-limonene + reduced [NADPH--hemoprotein reductase] + O2 = (1S,6R)-isopiperitenol + oxidized [NADPH--hemoprotein reductase] + H2O + H(+). Functionally, hydroxylates (-)-(4S)-limonene to (-)-trans-isopiperitenol, a precursor of (-)-menthol, responsible for the cooling sensation of peppermint. Fluorinated substrate analogs are hydroxylated with the same regio- and stereochemistry. In Mentha piperita (Peppermint), this protein is Cytochrome P450 71D15 (CYP71D15).